The primary structure comprises 283 residues: Pantothenate synthetase (283 aa).

Residue 30 to 37 participates in ATP binding; the sequence is MGNLHLGH. His-37 (proton donor) is an active-site residue. Gln-61 serves as a coordination point for (R)-pantoate. Gln-61 is a binding site for beta-alanine. An ATP-binding site is contributed by 149 to 152; sequence GQKD. Gln-155 contributes to the (R)-pantoate binding site. Residues Ile-178 and 186–189 each bind ATP; that span reads MSSR.

Belongs to the pantothenate synthetase family. As to quaternary structure, homodimer.

The protein resides in the cytoplasm. It carries out the reaction (R)-pantoate + beta-alanine + ATP = (R)-pantothenate + AMP + diphosphate + H(+). Its pathway is cofactor biosynthesis; (R)-pantothenate biosynthesis; (R)-pantothenate from (R)-pantoate and beta-alanine: step 1/1. Its function is as follows. Catalyzes the condensation of pantoate with beta-alanine in an ATP-dependent reaction via a pantoyl-adenylate intermediate. The protein is Pantothenate synthetase of Shewanella pealeana (strain ATCC 700345 / ANG-SQ1).